Reading from the N-terminus, the 40-residue chain is uncharacterized protein (40 aa).

Residues 1 to 14 (MNRMLSLSVQSQRA) show a composition bias toward polar residues. Residues 1–25 (MNRMLSLSVQSQRAPASPSPYGLKI) are disordered.

This is an uncharacterized protein from Treponema pallidum (strain Nichols).